Here is a 147-residue protein sequence, read N- to C-terminus: MVHLSGSEKTAVTNLWGHVNVNELGGEALGRLLVVYPWTQRFFESFGDLSSADAVMGNAKVKAHGAKVLTSFGDALKNLDNLKGTFAKLSELHCDKLHVDPENFNRLGNVLVVVLARHFSKEFTPEAQAAWQKLVSGVSHALAHKYH.

Val2 is subject to N-acetylvaline. The region spanning 3 to 147 (HLSGSEKTAV…VSHALAHKYH (145 aa)) is the Globin domain. A Phosphothreonine modification is found at Thr13. Position 45 is a phosphoserine (Ser45). N6-acetyllysine is present on Lys60. Position 64 (His64) interacts with heme b. N6-acetyllysine is present on Lys83. His93 lines the heme b pocket. Position 94 is an S-nitrosocysteine (Cys94). Residue Lys145 is modified to N6-acetyllysine.

It belongs to the globin family. Heterotetramer of two alpha chains and two beta chains. As to expression, red blood cells.

Its function is as follows. Involved in oxygen transport from the lung to the various peripheral tissues. The chain is Hemoglobin subunit beta (HBB) from Tachyglossus aculeatus aculeatus (Southeast Australian short-beaked echidna).